Here is a 455-residue protein sequence, read N- to C-terminus: J protein JJJ2 (455 aa).

Residues 12–76 (TYYSILGVPT…QLRAEYDKKL (65 aa)) enclose the J domain. Residues 104–241 (RNSKPYEQQP…RKKSEKKATP (138 aa)) are disordered. Residues 133–144 (NSNPHNENSSNN) show a composition bias toward low complexity. Positions 156 to 168 (TLSKDSEDKHGTD) are enriched in basic and acidic residues.

The protein localises to the cytoplasm. It localises to the nucleus. This Candida glabrata (strain ATCC 2001 / BCRC 20586 / JCM 3761 / NBRC 0622 / NRRL Y-65 / CBS 138) (Yeast) protein is J protein JJJ2 (JJJ2).